A 207-amino-acid chain; its full sequence is Small ribosomal subunit protein uS4 (207 aa).

Residues 31 to 55 (KCKLDSKPGQHGRTSGARTSDYGTQ) are disordered. A compositionally biased stretch (polar residues) spans 42-53 (GRTSGARTSDYG). An S4 RNA-binding domain is found at 97 to 160 (SRLDNVVYRM…KKQARIVEAL (64 aa)).

This sequence belongs to the universal ribosomal protein uS4 family. As to quaternary structure, part of the 30S ribosomal subunit. Contacts protein S5. The interaction surface between S4 and S5 is involved in control of translational fidelity.

One of the primary rRNA binding proteins, it binds directly to 16S rRNA where it nucleates assembly of the body of the 30S subunit. Its function is as follows. With S5 and S12 plays an important role in translational accuracy. The chain is Small ribosomal subunit protein uS4 from Burkholderia thailandensis (strain ATCC 700388 / DSM 13276 / CCUG 48851 / CIP 106301 / E264).